Here is a 239-residue protein sequence, read N- to C-terminus: uncharacterized protein (239 aa).

This is an uncharacterized protein from Methanocaldococcus jannaschii (strain ATCC 43067 / DSM 2661 / JAL-1 / JCM 10045 / NBRC 100440) (Methanococcus jannaschii).